The sequence spans 946 residues: MKPLSSPLQQYWQTVVERLPEPLAEESLSAQAKSVLTFSDFVQDSVIAHPEWLTELESQPPQADEWQHYAAWLQEALCNVSDEAGLMRELRLFRRRIMVRIAWAQTLALVTEESILQQLSYLAETLIVAARDWLYDACCREWGTPCNAQGEAQPLLILGMGKLGGGELNFSSDIDLIFAWPEHGCTQGGRRELDNAQFFTRMGQRLIKVLDQPTQDGFVYRVDMRLRPFGESGPLVLSFAALEDYYQEQGRDWERYAMVKARIMGDSEGVYANELRAMLRPFVFRRYIDFSVIQSLRNMKGMIAREVRRRGLTDNIKLGAGGIREIEFIVQVFQLIRGGREPSLQSRSLLPTLSAIAELHLLSENDAEQLRVAYLFLRRLENLLQSINDEQTQTLPSDELNRARLAWAMDFADWPQLTGALTAHMTNVRRVFNELIGDDESETQEESLSEQWRELWQDALQEDDTTPVLAHLSEDDRKQVLTLIADFRKELDKRTIGPRGRQVLDHLMPHLLSDVCAREDAAVTLSRITALLVGIVTRTTYLELLSEFPAALKHLISLCAASPMIASQLARYPLLLDELLDPNTLYQPTATDAYRDELRQYLLRVPEDDEEQQLEALRQFKQAQLLRIAAADIAGTLPVMKVSDHLTWLAEAMIDAVVQQAWVQMVARYGKPNHLNEREGRGFAVVGYGKLGGWELGYSSDLDLIFLHDCPMDAMTDGEREIDGRQFYLRLAQRIMHLFSTRTSSGILYEVDARLRPSGAAGMLVTSAEAFADYQKNEAWTWEHQALVRARVVYGDPQLTAHFDAVRREIMTLPREGKTLQTEVREMREKMRAHLGNKHRDRFDIKADEGGITDIEFITQYLVLRYAHEKPKLTRWSDNVRILELLAQNDIMEEQEAMALTRAYTTLRDELHHLALQELPGHVSEDCFTAERELVRASWQKWLVEE.

The tract at residues 1–440 (MKPLSSPLQQ…VFNELIGDDE (440 aa)) is adenylyl removase. The adenylyl transferase stretch occupies residues 449–946 (SEQWRELWQD…ASWQKWLVEE (498 aa)).

It belongs to the GlnE family. It depends on Mg(2+) as a cofactor.

The catalysed reaction is [glutamine synthetase]-O(4)-(5'-adenylyl)-L-tyrosine + phosphate = [glutamine synthetase]-L-tyrosine + ADP. The enzyme catalyses [glutamine synthetase]-L-tyrosine + ATP = [glutamine synthetase]-O(4)-(5'-adenylyl)-L-tyrosine + diphosphate. Functionally, involved in the regulation of glutamine synthetase GlnA, a key enzyme in the process to assimilate ammonia. When cellular nitrogen levels are high, the C-terminal adenylyl transferase (AT) inactivates GlnA by covalent transfer of an adenylyl group from ATP to specific tyrosine residue of GlnA, thus reducing its activity. Conversely, when nitrogen levels are low, the N-terminal adenylyl removase (AR) activates GlnA by removing the adenylyl group by phosphorolysis, increasing its activity. The regulatory region of GlnE binds the signal transduction protein PII (GlnB) which indicates the nitrogen status of the cell. The sequence is that of Bifunctional glutamine synthetase adenylyltransferase/adenylyl-removing enzyme from Escherichia coli (strain K12 / MC4100 / BW2952).